Reading from the N-terminus, the 292-residue chain is Hypoxia responsive morphology factor A (292 aa).

The Bipartite nuclear localization signal signature appears at 48–70 (RRNGRRRNLEYVAQHRRKIARKI). The interval 156 to 186 (GKEHYSLHLSTLPAIRNAFGDVIFDAIERSP) is RNA recognition motif (RRM)-like domain.

The protein belongs to the hrmA family.

The protein localises to the nucleus. Its function is as follows. Hypoxia responsive morphology factor that modulates the expression of the subtelomeric hrmA-associated cluster (HAC) containing genes that alter the hyphal surface (such as reduced total chitin or increased beta-glucan exposure) and perturb inter-hyphal interactions within the developing biofilms, resulting in a loss of vertically aligned polarized growing filaments. Consequently, this hypoxia-typic morphotype (called H-MORPH) with altered biofilm architecture leads to increased hypoxia fitness, increased host inflammation, rapid disease progression, and mortality in a murine model of invasive aspergillosis. This chain is Hypoxia responsive morphology factor A, found in Aspergillus fumigatus (strain CBS 144.89 / FGSC A1163 / CEA10) (Neosartorya fumigata).